Consider the following 303-residue polypeptide: Phosphatidylglycerol--prolipoprotein diacylglyceryl transferase (303 aa).

Transmembrane regions (helical) follow at residues Leu18 to Leu38, Leu58 to Glu78, Ile106 to Phe126, and Glu133 to Gly153. Residue Arg154 participates in a 1,2-diacyl-sn-glycero-3-phospho-(1'-sn-glycerol) binding. 3 consecutive transmembrane segments (helical) span residues Pro193 to Phe213, Leu223 to Ile243, and Ile266 to Tyr286.

Belongs to the Lgt family.

The protein localises to the cell inner membrane. It catalyses the reaction L-cysteinyl-[prolipoprotein] + a 1,2-diacyl-sn-glycero-3-phospho-(1'-sn-glycerol) = an S-1,2-diacyl-sn-glyceryl-L-cysteinyl-[prolipoprotein] + sn-glycerol 1-phosphate + H(+). The protein operates within protein modification; lipoprotein biosynthesis (diacylglyceryl transfer). Its function is as follows. Catalyzes the transfer of the diacylglyceryl group from phosphatidylglycerol to the sulfhydryl group of the N-terminal cysteine of a prolipoprotein, the first step in the formation of mature lipoproteins. This Prochlorococcus marinus (strain NATL2A) protein is Phosphatidylglycerol--prolipoprotein diacylglyceryl transferase.